Consider the following 439-residue polypeptide: CBL-interacting protein kinase 14 (439 aa).

One can recognise a Protein kinase domain in the interval 12–267 (YELGRLLGKG…IQKIKESTWF (256 aa)). Residues 18–26 (LGKGTFGKV) and Lys41 each bind ATP. Residue Asp135 is the Proton acceptor of the active site. The interval 153–182 (DFGLSALSESKRQDGLLHTTCGTPAYVAPE) is activation loop. The NAF domain maps to 298 to 333 (RKKNAHEDVKPMSVTNLNAFEIISFSKGFDLSGMFI). A PPI region spans residues 338–367 (RNEARFTSDKSASTIISKLEDVAKALNLRV).

This sequence belongs to the protein kinase superfamily. CAMK Ser/Thr protein kinase family. SNF1 subfamily. It depends on Mn(2+) as a cofactor.

The catalysed reaction is L-seryl-[protein] + ATP = O-phospho-L-seryl-[protein] + ADP + H(+). The enzyme catalyses L-threonyl-[protein] + ATP = O-phospho-L-threonyl-[protein] + ADP + H(+). CIPK serine-threonine protein kinases interact with CBL proteins. Binding of a CBL protein to the regulatory NAF domain of CIPK protein lead to the activation of the kinase in a calcium-dependent manner. This chain is CBL-interacting protein kinase 14 (CIPK14), found in Oryza sativa subsp. japonica (Rice).